The primary structure comprises 473 residues: Glutamate--tRNA ligase (473 aa).

Residues 11–21 (PSPTGFLHIGG) carry the 'HIGH' region motif. Positions 240 to 244 (KLSKR) match the 'KMSKS' region motif. Lys243 contributes to the ATP binding site.

This sequence belongs to the class-I aminoacyl-tRNA synthetase family. Glutamate--tRNA ligase type 1 subfamily. Monomer.

It is found in the cytoplasm. The enzyme catalyses tRNA(Glu) + L-glutamate + ATP = L-glutamyl-tRNA(Glu) + AMP + diphosphate. Functionally, catalyzes the attachment of glutamate to tRNA(Glu) in a two-step reaction: glutamate is first activated by ATP to form Glu-AMP and then transferred to the acceptor end of tRNA(Glu). The sequence is that of Glutamate--tRNA ligase from Afipia carboxidovorans (strain ATCC 49405 / DSM 1227 / KCTC 32145 / OM5) (Oligotropha carboxidovorans).